The chain runs to 101 residues: Urease subunit beta (101 aa).

It belongs to the urease beta subunit family. In terms of assembly, heterotrimer of UreA (gamma), UreB (beta) and UreC (alpha) subunits. Three heterotrimers associate to form the active enzyme.

It is found in the cytoplasm. The enzyme catalyses urea + 2 H2O + H(+) = hydrogencarbonate + 2 NH4(+). It functions in the pathway nitrogen metabolism; urea degradation; CO(2) and NH(3) from urea (urease route): step 1/1. This chain is Urease subunit beta, found in Polaromonas naphthalenivorans (strain CJ2).